The sequence spans 209 residues: Putative NAD(P)H nitroreductase YdgI (209 aa).

Residues 14–16 (RRS), 72–74 (QTQ), 161–162 (GG), and Arg-199 each bind FMN.

The protein belongs to the nitroreductase family. The cofactor is FMN.

This is Putative NAD(P)H nitroreductase YdgI (ydgI) from Bacillus subtilis (strain 168).